We begin with the raw amino-acid sequence, 404 residues long: Cytoplasmic tRNA 2-thiolation protein 2 (404 aa).

Belongs to the CTU2/NCS2 family.

The protein localises to the cytoplasm. It functions in the pathway tRNA modification; 5-methoxycarbonylmethyl-2-thiouridine-tRNA biosynthesis. Functionally, plays a central role in 2-thiolation of mcm(5)S(2)U at tRNA wobble positions of tRNA(Lys), tRNA(Glu) and tRNA(Gln). May act by forming a heterodimer with NCS6/CTU1 that ligates sulfur from thiocarboxylated URM1 onto the uridine of tRNAs at wobble position. The protein is Cytoplasmic tRNA 2-thiolation protein 2 of Drosophila erecta (Fruit fly).